The sequence spans 631 residues: Glycosyltransferase-like protein LARGE (631 aa).

Residues 1 to 6 (MQSNYS) are Cytoplasmic-facing. A helical; Signal-anchor for type II membrane protein membrane pass occupies residues 7 to 27 (ISYFLLILFTGTSSYFTIWNF). The Lumenal segment spans residues 28–631 (VDHTRVGAFP…TASRLGIKLR (604 aa)). N-linked (GlcNAc...) asparagine glycosylation is found at Asn95, Asn105, Asn167, Asn177, Asn287, Asn400, Asn485, Asn502, Asn521, Asn529, and Asn593.

Belongs to the glycosyltransferase 8 family.

Its subcellular location is the golgi apparatus membrane. In terms of biological role, probable glycosyltransferase. This chain is Glycosyltransferase-like protein LARGE (lge-1), found in Caenorhabditis elegans.